We begin with the raw amino-acid sequence, 217 residues long: Thymidylate kinase (217 aa).

14–21 is an ATP binding site; sequence GNEGSGKT.

It belongs to the thymidylate kinase family.

It carries out the reaction dTMP + ATP = dTDP + ADP. Phosphorylation of dTMP to form dTDP in both de novo and salvage pathways of dTTP synthesis. This Orientia tsutsugamushi (strain Ikeda) (Rickettsia tsutsugamushi) protein is Thymidylate kinase.